A 397-amino-acid chain; its full sequence is Chalcone synthase 2 (397 aa).

Cys168 is an active-site residue.

The protein belongs to the thiolase-like superfamily. Chalcone/stilbene synthases family.

It catalyses the reaction (E)-4-coumaroyl-CoA + 3 malonyl-CoA + 3 H(+) = 2',4,4',6'-tetrahydroxychalcone + 3 CO2 + 4 CoA. Its pathway is secondary metabolite biosynthesis; flavonoid biosynthesis. Its function is as follows. The primary product of this enzyme is 4,2',4',6'-tetrahydroxychalcone (also termed naringenin-chalcone or chalcone) which can under specific conditions spontaneously isomerize into naringenin. This chain is Chalcone synthase 2 (CHS2), found in Daucus carota (Wild carrot).